Consider the following 227-residue polypeptide: MADS-box transcription factor 25 (227 aa).

Residues 1 to 61 (MGRGKIAIKR…GRLYDFSSSS (61 aa)) enclose the MADS-box domain. Residues 86–176 (AKFWQREVTT…RKKFNIAHQR (91 aa)) form the K-box domain. A disordered region spans residues 183 to 227 (KLNSGESTSSEQVTRSSKDPGESSTPRDSRVCIDLELSQKEVEDE). Residues 186 to 197 (SGESTSSEQVTR) are compositionally biased toward polar residues. The segment covering 198-227 (SSKDPGESSTPRDSRVCIDLELSQKEVEDE) has biased composition (basic and acidic residues).

As to expression, expressed in seedling roots.

The protein localises to the nucleus. Functionally, probable transcription factor. This is MADS-box transcription factor 25 (MADS25) from Oryza sativa subsp. japonica (Rice).